The chain runs to 335 residues: Tyrosine-protein phosphatase 1 (335 aa).

Residues 15-328 enclose the Tyrosine-protein phosphatase domain; that stretch reads LLGKFKFIQN…LFIYHAAKYL (314 aa). At S83 the chain carries Phosphoserine; by CLK1. C252 serves as the catalytic Phosphocysteine intermediate.

The protein belongs to the protein-tyrosine phosphatase family. Non-receptor class subfamily. Activated by phosphorylation at Ser-83.

It localises to the cytoplasm. The catalysed reaction is O-phospho-L-tyrosyl-[protein] + H2O = L-tyrosyl-[protein] + phosphate. In terms of biological role, is not required for vegetative growth. This is Tyrosine-protein phosphatase 1 (PTP1) from Saccharomyces cerevisiae (strain ATCC 204508 / S288c) (Baker's yeast).